The chain runs to 614 residues: UvrABC system protein C (614 aa).

Positions 12–91 constitute a GIY-YIG domain; that stretch reads ESPGVYLMKG…IKKHRPRYNL (80 aa). In terms of domain architecture, UVR spans 201 to 236; that stretch reads RDLLKTYRERMASAAANERYEEAARYRDLIRAIEVT.

Belongs to the UvrC family. Interacts with UvrB in an incision complex.

It is found in the cytoplasm. Functionally, the UvrABC repair system catalyzes the recognition and processing of DNA lesions. UvrC both incises the 5' and 3' sides of the lesion. The N-terminal half is responsible for the 3' incision and the C-terminal half is responsible for the 5' incision. This is UvrABC system protein C from Geobacter metallireducens (strain ATCC 53774 / DSM 7210 / GS-15).